The primary structure comprises 125 residues: Profilin-P (125 aa).

Residue S2 is modified to N-acetylserine.

This sequence belongs to the profilin family. In terms of assembly, occurs in many kinds of cells as a complex with monomeric actin in a 1:1 ratio.

It is found in the cytoplasm. The protein localises to the cytoskeleton. Functionally, binds to actin and affects the structure of the cytoskeleton. At high concentrations, profilin prevents the polymerization of actin, whereas it enhances it at low concentrations. By binding to PIP2, it inhibits the formation of IP3 and DG. The polypeptide is Profilin-P (PROP) (Physarum polycephalum (Slime mold)).